We begin with the raw amino-acid sequence, 127 residues long: Protein ApaG (127 aa).

Positions 3-127 (KTSIPDFQIT…FYLIAPLALH (125 aa)) constitute an ApaG domain.

This Bdellovibrio bacteriovorus (strain ATCC 15356 / DSM 50701 / NCIMB 9529 / HD100) protein is Protein ApaG.